The chain runs to 183 residues: Oleosin-B2 (183 aa).

The tract at residues 1 to 23 is polar; it reads QASIFSRFFRMFSFIFPFVNVIK. 3 helical membrane passes run 24–44, 46–66, and 72–92; these read LIIA…ALGG, AVAL…LVPA, and LLAS…GLIM. A hydrophobic region spans residues 24–95; it reads LIIASVTSLV…TGIGLIMGLV (72 aa).

Belongs to the oleosin family. In terms of tissue distribution, the full-length protein is found in the tapetal lipid bodies of immature anthers, the proteolytically cleaved C-terminal product is found on the coats of pollen grains. Not present in seeds.

It localises to the lipid droplet. Its subcellular location is the membrane. In terms of biological role, many of the major pollen coat proteins are derived from endoproteolytic cleavage of oleosin-like proteins. The chain is Oleosin-B2 (OlnB2) from Brassica napus (Rape).